The following is a 125-amino-acid chain: Large ribosomal subunit protein bL12 (125 aa).

This sequence belongs to the bacterial ribosomal protein bL12 family. In terms of assembly, homodimer. Part of the ribosomal stalk of the 50S ribosomal subunit. Forms a multimeric L10(L12)X complex, where L10 forms an elongated spine to which 2 to 4 L12 dimers bind in a sequential fashion. Binds GTP-bound translation factors.

Functionally, forms part of the ribosomal stalk which helps the ribosome interact with GTP-bound translation factors. Is thus essential for accurate translation. The polypeptide is Large ribosomal subunit protein bL12 (Alkalilimnicola ehrlichii (strain ATCC BAA-1101 / DSM 17681 / MLHE-1)).